Consider the following 778-residue polypeptide: MTISRQFTGLTLAGLFLGLSLSAQAFSPSVQTGADIRRTGFGVPHIRAENERGLGFGIGYAYAQDNLCLLANEIVTVNGERSRYFGPEQLTVEERENRISDVFFQWLNTPQAVNAFWQAQPAEVRDLVEGYAAGYNRYLAERRQQGLPQQCQGEWVRDIAAEDLVKLTRRLLVEGGVGQFAEALASATPPQAMANIENNARAYQLADTRLQRFALDRGSNAVAVGSERSFNGRGMLLANPHFPWVGGMRFYQMHLTIPGKLDVMGAALPGLPMINIGFNQHLAWTHTVDSSKHFTLYRLQLDPKDPTRYLLDGQSLPLSKQTVTVQVKQTDGQVVPVSRDVYSSQFGPIVQWPGKLDWNNQFAYSLRDANLDNDRVLKQWYAMNRAGNLKDLQDSVHTIQGIPWVNTLAVDDKGQTLYMNLSVVPNVSTDKLARCSDPRAGLKMIVLDGSNSACAWDIDPHAAQKGIYASSQLPQLLRKDFVQHSNDSAWLANPAQPLTGFSPLISQDGQPLGLRSRFALDRLATLSKKGLVSVQDLQHMVMDDQVFLATQVVPDLLKFCTSQSEAALKSVCSSLKAWDGRANLESGVGLVHFQSIMQAMQESPQAWRVAFDPKDAQHTPRGLAIEKPEVAKALREAMLASAEIAAKMGLTEKTRWGDVQVVSSGGQQTPIHGGPGTLGIYNAIQSVPREDGKLEVVSGTSYLQVVTFDDKGPHAQGLLAFSLSSDPASKYSRDQTEAFSKKQWSVLPFTEQQIKADPQYQVQTVRDDLEKTGKVAAQ.

A signal peptide spans 1-25; sequence MTISRQFTGLTLAGLFLGLSLSAQA. Residues 196-218 constitute a propeptide, spacer peptide; sequence IENNARAYQLADTRLQRFALDRG. The Nucleophile role is filled by Ser-219.

This sequence belongs to the peptidase S45 family. Heterodimer of an alpha subunit and a beta subunit processed from the same precursor.

It localises to the periplasm. It carries out the reaction an N-acyl-L-homoserine lactone + H2O = L-homoserine lactone + a carboxylate. Catalyzes the deacylation of acyl-homoserine lactone (AHL or acyl-HSL), releasing homoserine lactone (HSL) and the corresponding fatty acid. Possesses a specificity for the degradation of long-chain acyl-HSLs (side chains of 11 to 14 carbons in length). The protein is Acyl-homoserine lactone acylase PvdQ (pvdQ) of Pseudomonas fluorescens (strain Pf0-1).